Reading from the N-terminus, the 224-residue chain is Proline/serine-rich protein C17A5.10 (224 aa).

The span at 1–10 (MTDDSVPPPS) shows a compositional bias: pro residues. Residues 1 to 110 (MTDDSVPPPS…SNYNTAKPPY (110 aa)) form a disordered region. The span at 31-52 (TSTSAGHPSSSSSTLPNYAASS) shows a compositional bias: low complexity. 3 stretches are compositionally biased toward polar residues: residues 53–68 (LNSR…NAYS), 77–94 (PTSQ…STMY), and 101–110 (SNYNTAKPPY).

It belongs to the HUA1 family.

The protein localises to the cytoplasm. Functionally, may be involved in assembly and disassembly of the actin cytoskeleton. The sequence is that of Proline/serine-rich protein C17A5.10 from Schizosaccharomyces pombe (strain 972 / ATCC 24843) (Fission yeast).